A 187-amino-acid polypeptide reads, in one-letter code: UPF0301 protein YqgE (187 aa).

Belongs to the UPF0301 (AlgH) family.

In Salmonella paratyphi A (strain ATCC 9150 / SARB42), this protein is UPF0301 protein YqgE.